A 521-amino-acid chain; its full sequence is Cyclic AMP-responsive element-binding protein 3-like protein 2 (521 aa).

Topologically, residues 1 to 378 (MEVLESGEQS…CKLAGTQTGT (378 aa)) are cytoplasmic. Phosphoserine is present on serine 93. Lysine 178 participates in a covalent cross-link: Glycyl lysine isopeptide (Lys-Gly) (interchain with G-Cter in SUMO2). Serine 191 carries the phosphoserine modification. The disordered stretch occupies residues 196–264 (SVDQLHLPPT…PHKLQGSGPL (69 aa)). Residues 208 to 220 (SSHSSDSEGSLSP) are compositionally biased toward low complexity. Residues 294–357 (ALKKIRRKIK…RTLLQQLQKL (64 aa)) enclose the bZIP domain. The tract at residues 296 to 325 (KKIRRKIKNKISAQESRRKKKEYMDSLEKK) is basic motif. Residues 336–357 (LRKKVEVLENTNRTLLQQLQKL) are leucine-zipper. Residues 379 to 399 (CLMVVVLCFAVAFGSLFQGYG) form a helical; Signal-anchor for type II membrane protein membrane-spanning segment. Over 400–521 (LYPSATKMAL…ELERRVNATF (122 aa)) the chain is Lumenal. An S1P recognition motif is present at residues 427 to 430 (RNLL). N-linked (GlcNAc...) asparagine glycans are attached at residues asparagine 505 and asparagine 518.

This sequence belongs to the bZIP family. ATF subfamily. In terms of assembly, binds DNA as a dimer. Post-translationally, upon ER stress, translocated to the Golgi apparatus, where it is processed by regulated intramembrane proteolysis (RIP) to release the cytosol-facing N-terminal transcription factor domain. The cleavage is performed sequentially by site-1 and site-2 proteases (S1P/MBTPS1 and S2P/MBTPS2). N-glycosylated. In terms of processing, ubiquitinated by HRD1/SYVN1; undergoes 'Lys-48'-linked ubiquitination, followed by rapid proteasomal degradation under normal conditions. Upon ER stress, SYVN1 E3 ubiquitin-protein ligase dissociates from its substrate, ubiquitination does not occur and CREB3L2 is stabilized.

The protein localises to the endoplasmic reticulum membrane. The protein resides in the nucleus. In terms of biological role, transcription factor involved in unfolded protein response (UPR). In the absence of endoplasmic reticulum (ER) stress, inserted into ER membranes, with N-terminal DNA-binding and transcription activation domains oriented toward the cytosolic face of the membrane. In response to ER stress, transported to the Golgi, where it is cleaved in a site-specific manner by resident proteases S1P/MBTPS1 and S2P/MBTPS2. The released N-terminal cytosolic domain is translocated to the nucleus to effect transcription of specific target genes. Plays a critical role in chondrogenesis by activating the transcription of SEC23A, which promotes the transport and secretion of cartilage matrix proteins, and possibly that of ER biogenesis-related genes. In a neuroblastoma cell line, protects cells from ER stress-induced death. In vitro activates transcription of target genes via direct binding to the CRE site. The protein is Cyclic AMP-responsive element-binding protein 3-like protein 2 (Creb3l2) of Rattus norvegicus (Rat).